The chain runs to 719 residues: Penicillin-binding protein 1A (719 aa).

The segment at 62–223 (LIADLGSERR…NQYDPYSHPE (162 aa)) is transglycosylase. E91 serves as the catalytic Proton donor; for transglycosylase activity. The transpeptidase stretch occupies residues 297–611 (DVYTNVDQEA…RLTPLVGNGL (315 aa)). Catalysis depends on S370, which acts as the Acyl-ester intermediate; for transpeptidase activity. The interval 652 to 719 (ARSTWSSPAP…QNQNPQPAQP (68 aa)) is disordered. Positions 654 to 719 (STWSSPAPQQ…QNQNPQPAQP (66 aa)) are enriched in low complexity.

In the N-terminal section; belongs to the glycosyltransferase 51 family. The protein in the C-terminal section; belongs to the transpeptidase family. As to quaternary structure, interacts with MreC in the elongasome.

It is found in the secreted. It carries out the reaction [GlcNAc-(1-&gt;4)-Mur2Ac(oyl-L-Ala-gamma-D-Glu-L-Lys-D-Ala-D-Ala)](n)-di-trans,octa-cis-undecaprenyl diphosphate + beta-D-GlcNAc-(1-&gt;4)-Mur2Ac(oyl-L-Ala-gamma-D-Glu-L-Lys-D-Ala-D-Ala)-di-trans,octa-cis-undecaprenyl diphosphate = [GlcNAc-(1-&gt;4)-Mur2Ac(oyl-L-Ala-gamma-D-Glu-L-Lys-D-Ala-D-Ala)](n+1)-di-trans,octa-cis-undecaprenyl diphosphate + di-trans,octa-cis-undecaprenyl diphosphate + H(+). The catalysed reaction is Preferential cleavage: (Ac)2-L-Lys-D-Ala-|-D-Ala. Also transpeptidation of peptidyl-alanyl moieties that are N-acyl substituents of D-alanine.. It functions in the pathway cell wall biogenesis; peptidoglycan biosynthesis. Its function is as follows. Cell wall formation. This chain is Penicillin-binding protein 1A (pbpA), found in Streptococcus pneumoniae (strain ATCC BAA-255 / R6).